Consider the following 379-residue polypeptide: Anhydro-N-acetylmuramic acid kinase (379 aa).

9–16 provides a ligand contact to ATP; that stretch reads GTSADGVD.

Belongs to the anhydro-N-acetylmuramic acid kinase family.

The catalysed reaction is 1,6-anhydro-N-acetyl-beta-muramate + ATP + H2O = N-acetyl-D-muramate 6-phosphate + ADP + H(+). It functions in the pathway amino-sugar metabolism; 1,6-anhydro-N-acetylmuramate degradation. Its pathway is cell wall biogenesis; peptidoglycan recycling. Its function is as follows. Catalyzes the specific phosphorylation of 1,6-anhydro-N-acetylmuramic acid (anhMurNAc) with the simultaneous cleavage of the 1,6-anhydro ring, generating MurNAc-6-P. Is required for the utilization of anhMurNAc either imported from the medium or derived from its own cell wall murein, and thus plays a role in cell wall recycling. This is Anhydro-N-acetylmuramic acid kinase from Prochlorococcus marinus (strain MIT 9313).